A 319-amino-acid polypeptide reads, in one-letter code: Alpha-hemolysin (319 aa).

An N-terminal signal peptide occupies residues 1–26; sequence MKTRIVSSVTTTLLLGSILMNPVANA.

The protein belongs to the aerolysin family. In terms of assembly, self-assembles to form first a non-lytic oligomeric intermediate and then, a mushroom-shaped homoheptamer structure of 100 Angstroms in length and up to 100 Angstroms in diameter.

It is found in the secreted. Alpha-toxin binds to the membrane of eukaryotic cells resulting in the release of low-molecular weight molecules and leading to an eventual osmotic lysis. Inhibits host neutrophil chemotaxis to the lesion region. Heptamer oligomerization and pore formation is required for lytic activity. The polypeptide is Alpha-hemolysin (hly) (Staphylococcus aureus (strain NCTC 8325 / PS 47)).